A 496-amino-acid chain; its full sequence is Cobyric acid synthase (496 aa).

The GATase cobBQ-type domain occupies 256-444; the sequence is KINIAVVLLR…IHGILDNQAF (189 aa). Residue Cys337 is the Nucleophile of the active site. Residue His436 is part of the active site.

It belongs to the CobB/CobQ family. CobQ subfamily.

Its pathway is cofactor biosynthesis; adenosylcobalamin biosynthesis. In terms of biological role, catalyzes amidations at positions B, D, E, and G on adenosylcobyrinic A,C-diamide. NH(2) groups are provided by glutamine, and one molecule of ATP is hydrogenolyzed for each amidation. In Phocaeicola vulgatus (strain ATCC 8482 / DSM 1447 / JCM 5826 / CCUG 4940 / NBRC 14291 / NCTC 11154) (Bacteroides vulgatus), this protein is Cobyric acid synthase.